Here is a 165-residue protein sequence, read N- to C-terminus: Disulfide bond formation protein B (165 aa).

At 1–10 the chain is on the cytoplasmic side; it reads MPAWLTNRTI. A helical transmembrane segment spans residues 11-27; it reads YFLCFLAIAGLMGFAFY. At 28–45 the chain is on the periplasmic side; that stretch reads LQYVKDLEPCPLCMAQRI. C37 and C40 form a disulfide bridge. Residues 46-62 traverse the membrane as a helical segment; that stretch reads AFVLAGLVFLAAALHNP. The Cytoplasmic portion of the chain corresponds to 63-68; the sequence is KNTGTT. Residues 69–86 traverse the membrane as a helical segment; the sequence is VYAFLGWVTTLGGAALAT. Over 87-143 the chain is Periplasmic; sequence RQLWLQSLPADQVPACGPGLEYMLEAFPFSEVLTMMLTGTGECAEVQWTFLGLSIPG. C102 and C129 are joined by a disulfide. A helical membrane pass occupies residues 144 to 162; that stretch reads WTLVAFIGFTAVWAFAWVR. Topologically, residues 163–165 are cytoplasmic; sequence RPR.

This sequence belongs to the DsbB family.

It is found in the cell inner membrane. In terms of biological role, required for disulfide bond formation in some periplasmic proteins. Acts by oxidizing the DsbA protein. The chain is Disulfide bond formation protein B from Hahella chejuensis (strain KCTC 2396).